The primary structure comprises 541 residues: Chloride channel CLIC-like protein 1 (541 aa).

The N-terminal stretch at 1–18 is a signal peptide; sequence MLCSLLLCGCLLLITGYA. Residues 19–184 lie on the Lumenal side of the membrane; sequence HDDDWIDPTD…EDYFGVDPYN (166 aa). A helical transmembrane segment spans residues 185-205; the sequence is VFMVLLCLLCIVALVATELWT. Residues 206 to 217 are Cytoplasmic-facing; sequence YVRWHTQLKRVC. The helical transmembrane segment at 218 to 238 threads the bilayer; it reads IISFLVSLGWNWIYLYKVAFA. Over 239–329 the chain is Lumenal; the sequence is QHQANVAKMA…GEFIKALMKE (91 aa). The chain crosses the membrane as a helical span at residues 330 to 350; that stretch reads IPVLLQIPVLVILALAVLGFC. Over 351–541 the chain is Cytoplasmic; it reads YGAGQSVPML…GTDPVSSPCG (191 aa). The interval 362 to 381 is disordered; that stretch reads HFRGPEREPPRALEPDDRRR. The segment covering 364 to 381 has biased composition (basic and acidic residues); sequence RGPEREPPRALEPDDRRR. 2 positions are modified to phosphoserine: Ser-434 and Ser-438. Position 482 is a phosphothreonine (Thr-482). A Phosphoserine modification is found at Ser-504. Residues 511-522 are compositionally biased toward basic and acidic residues; it reads QLKTDSECRPHS. The interval 511–541 is disordered; that stretch reads QLKTDSECRPHSTEAAAAAARGTDPVSSPCG.

The protein belongs to the chloride channel MCLC family. As to quaternary structure, homomultimers. Interacts with mitochondrial protein PIGBOS1 (via C-terminus); the interaction occurs at the mitochondria-associated endoplasmic reticulum (ER) membrane, a zone of contact between the ER and mitochondrial membranes, but does not appear to play a role in ER-mitochondria tethering and is not affected by ER stress. Interacts with CALR. As to expression, expressed in testis (spermatocytes), liver and lung (at protein level). Expressed in spleen, liver, testis, kidney, heart, brain and lung.

The protein localises to the endoplasmic reticulum membrane. The enzyme catalyses chloride(in) = chloride(out). It catalyses the reaction bromide(in) = bromide(out). It carries out the reaction nitrate(in) = nitrate(out). The catalysed reaction is fluoride(in) = fluoride(out). Functionally, anion-selective channel with Ca(2+)-dependent and voltage-independent gating. Permeable to small monovalent anions with selectivity for bromide &gt; chloride &gt; nitrate &gt; fluoride. Operates in the endoplasmic reticulum (ER) membrane where it mediates chloride efflux to compensate for the loss of positive charges from the ER lumen upon Ca(2+) release. Contributes to the maintenance of ER Ca(2+) pools and activation of unfolded protein response to prevent accumulation of misfolded proteins in the ER lumen. Particularly involved in ER homeostasis mechanisms underlying motor neurons and retinal photoreceptors survival. This is Chloride channel CLIC-like protein 1 from Rattus norvegicus (Rat).